Consider the following 124-residue polypeptide: Small ribosomal subunit protein uS12 (124 aa).

A 3-methylthioaspartic acid modification is found at aspartate 89. The segment at 104–124 is disordered; sequence TAGVKDRRQSRSKYGAKTPKE.

Belongs to the universal ribosomal protein uS12 family. In terms of assembly, part of the 30S ribosomal subunit. Contacts proteins S8 and S17. May interact with IF1 in the 30S initiation complex.

In terms of biological role, with S4 and S5 plays an important role in translational accuracy. Functionally, interacts with and stabilizes bases of the 16S rRNA that are involved in tRNA selection in the A site and with the mRNA backbone. Located at the interface of the 30S and 50S subunits, it traverses the body of the 30S subunit contacting proteins on the other side and probably holding the rRNA structure together. The combined cluster of proteins S8, S12 and S17 appears to hold together the shoulder and platform of the 30S subunit. In Parasynechococcus marenigrum (strain WH8102), this protein is Small ribosomal subunit protein uS12.